A 261-amino-acid chain; its full sequence is Lys-63-specific deubiquitinase BRCC36 (261 aa).

Residues 6 to 149 enclose the MPN domain; that stretch reads VHIQGDAFLV…YTCFQSVQAQ (144 aa). 3 residues coordinate Zn(2+): histidine 92, histidine 94, and aspartate 105. The short motif at 92-105 is the JAMM motif element; that stretch reads HSHPHITVWPSHVD.

Belongs to the peptidase M67A family. BRCC36 subfamily. Component of the BRCA1-A complex, at least composed of brca1, bard1, uimc1/rap80, abraxas1, brcc3/brcc36, babam2 and babam1/nba1. In the BRCA1-A complex, interacts directly with abraxas1 and babam2. Component of the BRISC complex, at least composed of abraxas2, brcc3/brcc36, babam2 and babam1/nba1. Within the complex, interacts directly with abraxas2. Both the BRCA1-A complex and the BRISC complex bind polyubiquitin. Zn(2+) serves as cofactor.

Its subcellular location is the nucleus. The protein resides in the cytoplasm. It localises to the cytoskeleton. It is found in the spindle pole. In terms of biological role, metalloprotease that specifically cleaves 'Lys-63'-linked polyubiquitin chains. Does not have activity toward 'Lys-48'-linked polyubiquitin chains. Component of the BRCA1-A complex, a complex that specifically recognizes 'Lys-63'-linked ubiquitinated histones H2A and H2AX at DNA lesions sites, leading to target the brca1-bard1 heterodimer to sites of DNA damage at double-strand breaks (DSBs). In the BRCA1-A complex, it specifically removes 'Lys-63'-linked ubiquitin on histones H2A and H2AX, antagonizing the rnf8-dependent ubiquitination at double-strand breaks (DSBs). Catalytic subunit of the BRISC complex, a multiprotein complex that specifically cleaves 'Lys-63'-linked ubiquitin in various substrates. Mediates the specific 'Lys-63'-specific deubiquitination associated with the COP9 signalosome complex (CSN), via the interaction of the BRISC complex with the CSN complex. The BRISC complex is required for normal mitotic spindle assembly and microtubule attachment to kinetochores via its role in deubiquitinating numa1. Plays a role in interferon signaling via its role in the deubiquitination of the interferon receptor ifnar1; deubiquitination increases ifnar1 activity by enhancing its stability and cell surface expression. Acts as a regulator of the NLRP3 inflammasome by mediating deubiquitination of nlrp3. Down-regulates the response to bacterial lipopolysaccharide (LPS) via its role in ifnar1 deubiquitination. In Xenopus tropicalis (Western clawed frog), this protein is Lys-63-specific deubiquitinase BRCC36 (brcc3).